The chain runs to 157 residues: Protein E6 (157 aa).

2 zinc fingers span residues 41 to 77 (CNFC…CRVC) and 114 to 150 (CQTC…CRQC).

This sequence belongs to the papillomaviridae E6 protein family. As to quaternary structure, forms homodimers. Interacts with ubiquitin-protein ligase UBE3A/E6-AP; this interaction stimulates UBE3A ubiquitin activity. Interacts with host BAK1.

The protein localises to the host cytoplasm. The protein resides in the host nucleus. Plays a major role in the induction and maintenance of cellular transformation. E6 associates with host UBE3A/E6-AP ubiquitin-protein ligase and modulates its activity. Protects host keratinocytes from apoptosis by mediating the degradation of host BAK1. May also inhibit host immune response. The sequence is that of Protein E6 from Human papillomavirus 36.